Consider the following 273-residue polypeptide: Putative pyruvate, phosphate dikinase regulatory protein (273 aa).

153-160 (GVSRTSKS) is a binding site for ADP.

Belongs to the pyruvate, phosphate/water dikinase regulatory protein family. PDRP subfamily.

The catalysed reaction is N(tele)-phospho-L-histidyl/L-threonyl-[pyruvate, phosphate dikinase] + ADP = N(tele)-phospho-L-histidyl/O-phospho-L-threonyl-[pyruvate, phosphate dikinase] + AMP + H(+). It catalyses the reaction N(tele)-phospho-L-histidyl/O-phospho-L-threonyl-[pyruvate, phosphate dikinase] + phosphate + H(+) = N(tele)-phospho-L-histidyl/L-threonyl-[pyruvate, phosphate dikinase] + diphosphate. Its function is as follows. Bifunctional serine/threonine kinase and phosphorylase involved in the regulation of the pyruvate, phosphate dikinase (PPDK) by catalyzing its phosphorylation/dephosphorylation. The chain is Putative pyruvate, phosphate dikinase regulatory protein from Ehrlichia canis (strain Jake).